The primary structure comprises 230 residues: RNA polymerase sigma factor FliA (230 aa).

Positions 6 to 78 are sigma-70 factor domain-2; it reads LWQRYVPLVR…MLDELRSRDW (73 aa). The Interaction with polymerase core subunit RpoC signature appears at 33–36; sequence DLLQ. The segment at 86–156 is sigma-70 factor domain-3; sequence NAREVASAMQ…VEPMLEGHED (71 aa). A sigma-70 factor domain-4 region spans residues 175–223; that stretch reads AIEALPEREKMVLTLYYQEELNLKEIGAVLEVGESRVSQLHSQAIKRLR. The H-T-H motif DNA-binding region spans 197 to 216; that stretch reads LKEIGAVLEVGESRVSQLHS.

It belongs to the sigma-70 factor family. FliA subfamily.

The protein resides in the cytoplasm. Functionally, sigma factors are initiation factors that promote the attachment of RNA polymerase to specific initiation sites and are then released. This sigma factor controls the expression of flagella-related genes. This is RNA polymerase sigma factor FliA from Yersinia enterocolitica.